The following is a 465-amino-acid chain: Protein unc-93 homolog A (465 aa).

A run of 5 helical transmembrane segments spans residues 8–28 (VLVV…LQSL), 40–60 (VISL…LPPI), 71–91 (IVVS…PGWA), 96–118 (TSAI…LTIS), and 140–160 (IFFF…SLIF). Residues asparagine 183 and asparagine 189 are each glycosylated (N-linked (GlcNAc...) asparagine). The chain crosses the membrane as a helical span at residues 200–220 (TLLGCYIGVGLLAIIFVAVFL). Residue asparagine 237 is glycosylated (N-linked (GlcNAc...) asparagine). The next 5 helical transmembrane spans lie at 256–276 (LLLL…LSGE), 281–301 (YVTC…FAAS), 319–339 (IALF…LLYW), 343–363 (PDQL…DAVW), and 410–427 (IYIA…YLYV).

It belongs to the unc-93 family.

The protein resides in the membrane. This is Protein unc-93 homolog A (unc93a) from Danio rerio (Zebrafish).